The sequence spans 191 residues: Guanylate kinase (191 aa).

One can recognise a Guanylate kinase-like domain in the interval 6–184 (GLIIILSSPS…TIQQIHTIIL (179 aa)). 13–20 (SPSGAGKS) contributes to the ATP binding site.

The protein belongs to the guanylate kinase family.

It is found in the cytoplasm. It catalyses the reaction GMP + ATP = GDP + ADP. Essential for recycling GMP and indirectly, cGMP. This is Guanylate kinase from Rickettsia bellii (strain RML369-C).